Consider the following 269-residue polypeptide: Proenkephalin-A (269 aa).

An N-terminal signal peptide occupies residues 1 to 24 (MAQFLRLCIWLLALGSCLLATVQA). 3 disulfides stabilise this stretch: Cys26–Cys48, Cys30–Cys52, and Cys33–Cys65. The tract at residues 165–191 (DNRAKDSHQQESTNNDEDSTSKRYGGF) is disordered. 2 propeptides span residues 198 to 209 (SPQLEDEAKELQ) and 219 to 229 (VGRPEWWMDYQ). Position 253 is a phosphoserine (Ser253).

The protein belongs to the opioid neuropeptide precursor family. Post-translationally, proenkephalin-A is cleaved by CTSL to generate Met-enkephalin. In terms of processing, processed and degraded by ACE. Probably cleaved by ACE. Post-translationally, processed by ACE to generate Met-enkephalin in the nucleus accumbens of the brain. In terms of processing, the N-terminal domain contains 6 conserved cysteines thought to be involved in disulfide bonding and/or processing. Expressed in brain, heart and testis.

Its subcellular location is the secreted. It localises to the cytoplasmic vesicle. The protein localises to the secretory vesicle. The protein resides in the chromaffin granule lumen. Neuropeptide that competes with and mimic the effects of opiate drugs. They play a role in a number of physiologic functions, including pain perception and responses to stress. Functionally, met-enkephalin-Arg-Phe neuropeptide acts as a strong ligand of Mu-type opioid receptor OPRM1. Met-enkephalin-Arg-Phe-binding to OPRM1 in the nucleus accumbens of the brain increases activation of OPRM1, leading to long-term synaptic depression of glutamate release. Its function is as follows. Increases glutamate release in the striatum and decreases GABA concentration in the striatum. In terms of biological role, increases glutamate release in the striatum. In Rattus norvegicus (Rat), this protein is Proenkephalin-A (Penk).